The sequence spans 225 residues: MLQHYSVSWKKGLAALCLLAVAGLSGCDQQENAAAKVEYDGLSNSQPLRVDANNHTVTMLVQINGRFLTDDTRHGIVFKDGSNGHKSLFMGYATPKAFYEALKEAGGTPGENMTMDNKETTHVTGSKLDISVNWQGAAKAYSFDEVIVDSNGKKLDMRFGGNLTAAEEKKTGCLVCLDSCPVGIVSNATYTYGAVEKRGEVKFKGNASVLPADNTLATVTFKIAE.

Residues 1–22 (MLQHYSVSWKKGLAALCLLAVA) form the signal peptide. In terms of domain architecture, 4Fe-4S ferredoxin-type spans 161 to 190 (GNLTAAEEKKTGCLVCLDSCPVGIVSNATY).

This is an uncharacterized protein from Escherichia coli (strain K12).